A 323-amino-acid chain; its full sequence is NADH-ubiquinone oxidoreductase chain 1 (323 aa).

8 helical membrane-spanning segments follow: residues 9-29 (ILNPLIYMVPVLLAVAFLTLI), 76-96 (LFVLPVLALTLALTLWAPMPM), 107-127 (ILFVLALSSLAVYSILGSGWA), 145-165 (ISYEVSLGLILLSVIIFSGGF), 175-195 (EATWLALPAWPLAAMWYISTL), 227-247 (LFFLAEYANILLMNTLSAVLF), 258-278 (EFTSLTLMTKAALLSMVFLWV), and 298-318 (FLPLTLALVIWHLSLSTACAG).

It belongs to the complex I subunit 1 family.

It localises to the mitochondrion inner membrane. It catalyses the reaction a ubiquinone + NADH + 5 H(+)(in) = a ubiquinol + NAD(+) + 4 H(+)(out). Its function is as follows. Core subunit of the mitochondrial membrane respiratory chain NADH dehydrogenase (Complex I) that is believed to belong to the minimal assembly required for catalysis. Complex I functions in the transfer of electrons from NADH to the respiratory chain. The immediate electron acceptor for the enzyme is believed to be ubiquinone. This is NADH-ubiquinone oxidoreductase chain 1 (MT-ND1) from Gadus morhua (Atlantic cod).